Consider the following 457-residue polypeptide: Flavohemoprotein-1 (457 aa).

Residues 2 to 157 (ALSEDTIKAV…LADLLIKREE (156 aa)) form the Globin domain. A heme b-binding site is contributed by histidine 106. Catalysis depends on charge relay system residues tyrosine 116 and glutamate 156. Residues 168-456 (GGWRQTRTFR…FEMFGPFKAS (289 aa)) form a reductase region. The FAD-binding FR-type domain occupies 171 to 278 (RQTRTFRVEE…APPYGDFFLR (108 aa)). Residues tyrosine 210 and 227 to 230 (RQYS) each bind FAD. 320–325 (GIGQTP) is a binding site for NADP(+). 449-452 (MFGP) provides a ligand contact to FAD.

The protein belongs to the globin family. Two-domain flavohemoproteins subfamily. It in the C-terminal section; belongs to the flavoprotein pyridine nucleotide cytochrome reductase family. Monomer. Requires heme b as cofactor. FAD serves as cofactor.

It catalyses the reaction 2 nitric oxide + NADPH + 2 O2 = 2 nitrate + NADP(+) + H(+). The catalysed reaction is 2 nitric oxide + NADH + 2 O2 = 2 nitrate + NAD(+) + H(+). Flavohemoprotein involved in nitric oxide (NO) detoxification in an aerobic process, termed nitric oxide dioxygenase (NOD) reaction that utilizes O(2) and NAD(P)H to convert NO to nitrate, which protects the protozoan parasite from various noxious nitrogen compounds. Therefore, plays a central role in the inducible response to nitrosative stress. May also be involved in O(2) detoxification. In Giardia intestinalis (strain P15) (Giardia lamblia), this protein is Flavohemoprotein-1 (hmpA-1).